Consider the following 1129-residue polypeptide: PAN2-PAN3 deadenylation complex catalytic subunit PAN2 (1129 aa).

WD repeat units follow at residues proline 20–tyrosine 60, proline 104–proline 146, aspartate 148–valine 183, glycine 186–lysine 226, and leucine 280–glutamate 319. The tract at residues tyrosine 320–lysine 457 is linker. The tract at residues arginine 396–arginine 427 is disordered. One can recognise a USP domain in the interval aspartate 458–lysine 830. Positions valine 880–leucine 1052 constitute an Exonuclease domain. The a divalent metal cation site is built by aspartate 883, glutamate 885, aspartate 992, and aspartate 1045. The tract at residues alanine 1083–arginine 1129 is disordered.

The protein belongs to the peptidase C19 family. PAN2 subfamily. In terms of assembly, forms a heterotrimer with an asymmetric homodimer of the regulatory subunit PAN3 to form the poly(A)-nuclease (PAN) deadenylation complex. A divalent metal cation serves as cofactor.

Its subcellular location is the cytoplasm. The catalysed reaction is Exonucleolytic cleavage of poly(A) to 5'-AMP.. With respect to regulation, positively regulated by the regulatory subunit PAN3. In terms of biological role, catalytic subunit of the poly(A)-nuclease (PAN) deadenylation complex, one of two cytoplasmic mRNA deadenylases involved in mRNA turnover. PAN specifically shortens poly(A) tails of RNA and the activity is stimulated by poly(A)-binding protein PAB1. PAN deadenylation is followed by rapid degradation of the shortened mRNA tails by the CCR4-NOT complex. Deadenylated mRNAs are then degraded by two alternative mechanisms, namely exosome-mediated 3'-5' exonucleolytic degradation, or deadenylation-dependent mRNA decaping and subsequent 5'-3' exonucleolytic degradation by XRN1. May also be involved in post-transcriptional maturation of mRNA poly(A) tails. In Phaeosphaeria nodorum (strain SN15 / ATCC MYA-4574 / FGSC 10173) (Glume blotch fungus), this protein is PAN2-PAN3 deadenylation complex catalytic subunit PAN2.